We begin with the raw amino-acid sequence, 328 residues long: N-acetyl-gamma-glutamyl-phosphate reductase (328 aa).

Cys-143 is an active-site residue.

Belongs to the NAGSA dehydrogenase family. Type 1 subfamily.

Its subcellular location is the cytoplasm. It catalyses the reaction N-acetyl-L-glutamate 5-semialdehyde + phosphate + NADP(+) = N-acetyl-L-glutamyl 5-phosphate + NADPH + H(+). The protein operates within amino-acid biosynthesis; L-arginine biosynthesis; N(2)-acetyl-L-ornithine from L-glutamate: step 3/4. Catalyzes the NADPH-dependent reduction of N-acetyl-5-glutamyl phosphate to yield N-acetyl-L-glutamate 5-semialdehyde. The protein is N-acetyl-gamma-glutamyl-phosphate reductase of Methanosphaerula palustris (strain ATCC BAA-1556 / DSM 19958 / E1-9c).